The following is a 228-amino-acid chain: PKHD-type hydroxylase XAC2942 (228 aa).

In terms of domain architecture, Fe2OG dioxygenase spans 78-180 (RIYPPLFNRY…RVACFFWAQS (103 aa)). Fe cation is bound by residues His96, Asp98, and His161. Arg171 lines the 2-oxoglutarate pocket.

Fe(2+) serves as cofactor. It depends on L-ascorbate as a cofactor.

This Xanthomonas axonopodis pv. citri (strain 306) protein is PKHD-type hydroxylase XAC2942.